Here is a 29-residue protein sequence, read N- to C-terminus: GLPVCGESCFGGTCNTPGCSCTWPVCTRD.

Positions 1 to 29 form a cross-link, cyclopeptide (Gly-Asp); the sequence is GLPVCGESCFGGTCNTPGCSCTWPVCTRD. Intrachain disulfides connect cysteine 5-cysteine 19, cysteine 9-cysteine 21, and cysteine 14-cysteine 26.

This is a cyclic peptide.

Probably participates in a plant defense mechanism. The protein is Cyclotide psyleio D of Psychotria brachyceras.